A 307-amino-acid polypeptide reads, in one-letter code: Oxygen-dependent coproporphyrinogen-III oxidase (307 aa).

Serine 99 is a binding site for substrate. Histidine 103 and histidine 113 together coordinate a divalent metal cation. Histidine 113 (proton donor) is an active-site residue. 115–117 (NVR) contributes to the substrate binding site. A divalent metal cation contacts are provided by histidine 152 and histidine 182. An important for dimerization region spans residues 247–282 (YVEFNLVFDRGTLFGLQSGGRTESILMSMPPVVNWR). 265–267 (GGR) serves as a coordination point for substrate.

This sequence belongs to the aerobic coproporphyrinogen-III oxidase family. As to quaternary structure, homodimer. It depends on a divalent metal cation as a cofactor.

It is found in the cytoplasm. It catalyses the reaction coproporphyrinogen III + O2 + 2 H(+) = protoporphyrinogen IX + 2 CO2 + 2 H2O. It participates in porphyrin-containing compound metabolism; protoporphyrin-IX biosynthesis; protoporphyrinogen-IX from coproporphyrinogen-III (O2 route): step 1/1. Involved in the heme biosynthesis. Catalyzes the aerobic oxidative decarboxylation of propionate groups of rings A and B of coproporphyrinogen-III to yield the vinyl groups in protoporphyrinogen-IX. In Paraburkholderia xenovorans (strain LB400), this protein is Oxygen-dependent coproporphyrinogen-III oxidase.